A 212-amino-acid polypeptide reads, in one-letter code: MTDLSDIRREYAKGGLRRADLPQNPMDLFALWMTQARDAELSDPTAMCVATVDEQGQPFQRIVLLKRFDDTGFVFFTNLGSRKAQQIAANNKVSLHFPWHPLERQVSVLGEAQALSTTEVLKYFMTRPKDSQIAAWVSQQSSKLSARQVLEGKFFEMKAKFAKGDVPLPSFWGGYLVRPKSIEFWQGGEHRLHDRFIYTRDNTQWIIDRLAP.

Substrate-binding positions include 8-11 and K66; that span reads RREY. Residues 61-66, 76-77, R82, K83, and Q105 contribute to the FMN site; these read RIVLLK and FT. Y123, R127, and S131 together coordinate substrate. Residues 140–141 and W185 contribute to the FMN site; that span reads QS. 191–193 lines the substrate pocket; it reads RLH. FMN is bound at residue R195.

This sequence belongs to the pyridoxamine 5'-phosphate oxidase family. As to quaternary structure, homodimer. The cofactor is FMN.

The catalysed reaction is pyridoxamine 5'-phosphate + O2 + H2O = pyridoxal 5'-phosphate + H2O2 + NH4(+). It carries out the reaction pyridoxine 5'-phosphate + O2 = pyridoxal 5'-phosphate + H2O2. It functions in the pathway cofactor metabolism; pyridoxal 5'-phosphate salvage; pyridoxal 5'-phosphate from pyridoxamine 5'-phosphate: step 1/1. The protein operates within cofactor metabolism; pyridoxal 5'-phosphate salvage; pyridoxal 5'-phosphate from pyridoxine 5'-phosphate: step 1/1. Catalyzes the oxidation of either pyridoxine 5'-phosphate (PNP) or pyridoxamine 5'-phosphate (PMP) into pyridoxal 5'-phosphate (PLP). This Shewanella sp. (strain W3-18-1) protein is Pyridoxine/pyridoxamine 5'-phosphate oxidase.